Consider the following 156-residue polypeptide: Small ribosomal subunit protein uS7 (156 aa).

The protein belongs to the universal ribosomal protein uS7 family. As to quaternary structure, part of the 30S ribosomal subunit. Contacts proteins S9 and S11.

Its function is as follows. One of the primary rRNA binding proteins, it binds directly to 16S rRNA where it nucleates assembly of the head domain of the 30S subunit. Is located at the subunit interface close to the decoding center, probably blocks exit of the E-site tRNA. The sequence is that of Small ribosomal subunit protein uS7 from Rubrobacter xylanophilus (strain DSM 9941 / JCM 11954 / NBRC 16129 / PRD-1).